Here is a 418-residue protein sequence, read N- to C-terminus: MARAAFLFKTVGFGGLQNVPINDELSSHLLRAGNSPWQLTQFLDWISLGRGLATSALVPTAGSRYYQMSCLLSGTLQIPFRPNHRWGDIRFLRLVWSAPTLDGLVVAPPQVLAQPALQAQADRVYDCDDYPFLARDPRFKHRVYQQLSAVTLLNLTGFGPISYVRVDEDMWSGDVNQLLMNYFGHTFAEIAYTLCQASANRPWEHDGTYARMTQIILSLFWLSYVGVIHQQNTYRTFYFQCNRRGDAAEVWILSCSLNHSAQIRPGNRSLFVMPTSPDWNMDVNLILSSTLTGCLCSGSQLPLIDNNSVPAVSRNIHGWTGRAGNQLHGFQVRRMVTEFCDRLRRDGVMTQAQQNQIEALADQTQQFKRDKLEAWAREDDQYNQANPNSTMFRTKPFTNAQWGRGNTGATSAAIAALI.

The protein belongs to the orthoreovirus sigma-1 protein family. As to quaternary structure, interacts with protein mu-NS; in viral inclusions.

It localises to the virion. Its function is as follows. Inner capsid (core) component. The chain is Inner capsid protein sigma-2 (S2) from Mammalia (T1L).